The sequence spans 452 residues: Adenosylmethionine-8-amino-7-oxononanoate aminotransferase (452 aa).

116-117 (GS) contacts pyridoxal 5'-phosphate. Tyr-152 contributes to the substrate binding site. Asp-257 contributes to the pyridoxal 5'-phosphate binding site. Substrate-binding residues include Lys-286, Gly-321, and Arg-414. Lys-286 carries the N6-(pyridoxal phosphate)lysine modification.

This sequence belongs to the class-III pyridoxal-phosphate-dependent aminotransferase family. BioA subfamily. Homodimer. Requires pyridoxal 5'-phosphate as cofactor.

Its subcellular location is the cytoplasm. It catalyses the reaction (8S)-8-amino-7-oxononanoate + S-adenosyl-L-methionine = S-adenosyl-4-methylsulfanyl-2-oxobutanoate + (7R,8S)-7,8-diammoniononanoate. It participates in cofactor biosynthesis; biotin biosynthesis; 7,8-diaminononanoate from 8-amino-7-oxononanoate (SAM route): step 1/1. Its function is as follows. Catalyzes the transfer of the alpha-amino group from S-adenosyl-L-methionine (SAM) to 7-keto-8-aminopelargonic acid (KAPA) to form 7,8-diaminopelargonic acid (DAPA). It is the only aminotransferase known to utilize SAM as an amino donor. The polypeptide is Adenosylmethionine-8-amino-7-oxononanoate aminotransferase (Staphylococcus aureus (strain NCTC 8325 / PS 47)).